The sequence spans 582 residues: ATP-dependent lipid A-core flippase (582 aa).

6 helical membrane passes run 27-48 (LVVSTIALVINAAADTYMISLL), 63-85 (FLRILPFMILGLMFVRGLSGFAS), 144-168 (VSIVREGASIIGLLTLMFWNSWQLS), 170-188 (VLIVVAPVVAFAISFVSKR), 244-266 (LVSAQSIADPVIQMIASLALFAV), and 283-302 (TFTVVFSAMFGLMRPLKALT). The ABC transmembrane type-1 domain occupies 28 to 310 (VVSTIALVIN…LTSVTSEFQR (283 aa)). Residues 342-578 (VDVKDVTFTY…DGAYAQLHRI (237 aa)) enclose the ABC transporter domain. 376–383 (GRSGSGKS) contacts ATP.

It belongs to the ABC transporter superfamily. Lipid exporter (TC 3.A.1.106) family. Homodimer.

It is found in the cell inner membrane. It catalyses the reaction ATP + H2O + lipid A-core oligosaccharideSide 1 = ADP + phosphate + lipid A-core oligosaccharideSide 2.. In terms of biological role, involved in lipopolysaccharide (LPS) biosynthesis. Translocates lipid A-core from the inner to the outer leaflet of the inner membrane. Transmembrane domains (TMD) form a pore in the inner membrane and the ATP-binding domain (NBD) is responsible for energy generation. Shows ATPase activity. This Vibrio cholerae serotype O1 (strain ATCC 39315 / El Tor Inaba N16961) protein is ATP-dependent lipid A-core flippase.